Reading from the N-terminus, the 726-residue chain is Catalase-peroxidase (726 aa).

Residues 1–34 form a disordered region; the sequence is MSMSDDTHNSLSTGKCPFHQGSHDRSAGAGTSSH. A cross-link (tryptophyl-tyrosyl-methioninium (Trp-Tyr) (with M-252)) is located at residues 105–226; sequence WHGAGTYRSV…LGATEMGLIY (122 aa). Residue histidine 106 is the Proton acceptor of the active site. A cross-link (tryptophyl-tyrosyl-methioninium (Tyr-Met) (with W-105)) is located at residues 226–252; it reads YVNPEGPDHSGEPLSAAAAIRATFGNM. Residue histidine 267 coordinates heme b.

Belongs to the peroxidase family. Peroxidase/catalase subfamily. As to quaternary structure, homodimer or homotetramer. Heme b is required as a cofactor. In terms of processing, formation of the three residue Trp-Tyr-Met cross-link is important for the catalase, but not the peroxidase activity of the enzyme.

It catalyses the reaction H2O2 + AH2 = A + 2 H2O. The enzyme catalyses 2 H2O2 = O2 + 2 H2O. In terms of biological role, bifunctional enzyme with both catalase and broad-spectrum peroxidase activity. This is Catalase-peroxidase from Citrobacter koseri (strain ATCC BAA-895 / CDC 4225-83 / SGSC4696).